The following is a 319-amino-acid chain: Protease HtpX homolog (319 aa).

The next 2 helical transmembrane spans lie at 6-26 (TAML…VIGG) and 28-48 (GGMM…YWNS). Zn(2+) is bound at residue histidine 130. Residue glutamate 131 is part of the active site. Histidine 134 serves as a coordination point for Zn(2+). 2 helical membrane-spanning segments follow: residues 145-165 (LTAT…FFGG) and 172-192 (PLGF…AMLV). Zn(2+) is bound at residue glutamate 201. Positions 277 to 319 (MARETSTGSTAPVRPDNAGRKSRSVPRTGWGRGGSEPPKGPWS) are disordered.

It belongs to the peptidase M48B family. Requires Zn(2+) as cofactor.

Its subcellular location is the cell inner membrane. This is Protease HtpX homolog from Rhizobium meliloti (strain 1021) (Ensifer meliloti).